The primary structure comprises 159 residues: Ribosomal RNA large subunit methyltransferase H (159 aa).

An S-adenosyl-L-methionine-binding site is contributed by G108.

This sequence belongs to the RNA methyltransferase RlmH family. As to quaternary structure, homodimer.

It localises to the cytoplasm. It catalyses the reaction pseudouridine(1915) in 23S rRNA + S-adenosyl-L-methionine = N(3)-methylpseudouridine(1915) in 23S rRNA + S-adenosyl-L-homocysteine + H(+). In terms of biological role, specifically methylates the pseudouridine at position 1915 (m3Psi1915) in 23S rRNA. This chain is Ribosomal RNA large subunit methyltransferase H, found in Lactobacillus johnsonii (strain CNCM I-12250 / La1 / NCC 533).